Here is a 297-residue protein sequence, read N- to C-terminus: Bifunctional protein FolD 2 (297 aa).

NADP(+) contacts are provided by residues 172 to 174 (GRG), threonine 199, and valine 240.

The protein belongs to the tetrahydrofolate dehydrogenase/cyclohydrolase family. As to quaternary structure, homodimer.

The enzyme catalyses (6R)-5,10-methylene-5,6,7,8-tetrahydrofolate + NADP(+) = (6R)-5,10-methenyltetrahydrofolate + NADPH. It carries out the reaction (6R)-5,10-methenyltetrahydrofolate + H2O = (6R)-10-formyltetrahydrofolate + H(+). Its pathway is one-carbon metabolism; tetrahydrofolate interconversion. Functionally, catalyzes the oxidation of 5,10-methylenetetrahydrofolate to 5,10-methenyltetrahydrofolate and then the hydrolysis of 5,10-methenyltetrahydrofolate to 10-formyltetrahydrofolate. The sequence is that of Bifunctional protein FolD 2 from Paenarthrobacter aurescens (strain TC1).